Consider the following 451-residue polypeptide: Tubulin alpha chain (451 aa).

Gln-11 is a binding site for GTP. Lys-40 carries the post-translational modification N6-acetyllysine. The GTP site is built by Glu-71, Gly-144, Thr-145, Thr-179, Asn-206, and Asn-228. Residue Glu-71 participates in Mg(2+) binding. The active site involves Glu-254.

The protein belongs to the tubulin family. In terms of assembly, dimer of alpha and beta chains. A typical microtubule is a hollow water-filled tube with an outer diameter of 25 nm and an inner diameter of 15 nM. Alpha-beta heterodimers associate head-to-tail to form protofilaments running lengthwise along the microtubule wall with the beta-tubulin subunit facing the microtubule plus end conferring a structural polarity. Microtubules usually have 13 protofilaments but different protofilament numbers can be found in some organisms and specialized cells. The cofactor is Mg(2+). Undergoes a tyrosination/detyrosination cycle, the cyclic removal and re-addition of a C-terminal tyrosine residue by the enzymes tubulin tyrosine carboxypeptidase (TTCP) and tubulin tyrosine ligase (TTL), respectively. In terms of processing, acetylation of alpha chains at Lys-40 stabilizes microtubules and affects affinity and processivity of microtubule motors. This modification has a role in multiple cellular functions, ranging from cell motility, cell cycle progression or cell differentiation to intracellular trafficking and signaling.

The protein localises to the cytoplasm. It is found in the cytoskeleton. It carries out the reaction GTP + H2O = GDP + phosphate + H(+). Functionally, tubulin is the major constituent of microtubules, a cylinder consisting of laterally associated linear protofilaments composed of alpha- and beta-tubulin heterodimers. Microtubules grow by the addition of GTP-tubulin dimers to the microtubule end, where a stabilizing cap forms. Below the cap, tubulin dimers are in GDP-bound state, owing to GTPase activity of alpha-tubulin. The sequence is that of Tubulin alpha chain (TUBA) from Euglena gracilis.